A 1845-amino-acid chain; its full sequence is Collagen alpha-1(XXVII) chain (1845 aa).

A signal peptide spans 1–39 (MGTGFARGARGTAASGPGGGFLFAWILVSFTCHLASTQG). Residues 40–609 (APEDVDVLQR…LGPTPFPMLM (570 aa)) constitute a propeptide, N-terminal propeptide. The region spanning 72-237 (PSGFIFTQRA…NYCAHLRERC (166 aa)) is the Laminin G-like domain. The N-linked (GlcNAc...) asparagine glycan is linked to Asn-272. Disordered stretches follow at residues 299 to 478 (TKPL…VPKT), 502 to 572 (PPLG…RPST), 608 to 774 (LMGP…MGRP), and 827 to 1608 (LMGG…HPIQ). A compositionally biased stretch (polar residues) spans 312 to 323 (HSSSQTPLSPAK). Low complexity-rich tracts occupy residues 327-343 (RKTP…NSTR) and 356-372 (TTTS…SVSP). N-linked (GlcNAc...) asparagine glycosylation is present at Asn-340. Residues 429 to 439 (PRPPVPSPQPL) are compositionally biased toward pro residues. Positions 444-454 (GLSKKFTNPTV) are enriched in polar residues. Residues 554–564 (SARDASPRDLT) show a composition bias toward basic and acidic residues. 11 Collagen-like domains span residues 610 to 664 (GPPG…GDPG), 673 to 732 (GAKG…PGPV), 742 to 801 (GYIG…PGPP), 817 to 876 (GYPG…PGPL), 877 to 936 (GKAG…EGPM), 937 to 996 (GPPG…VGEK), 997 to 1038 (GDRG…PGSR), 1039 to 1096 (GLPG…GAKG), 1117 to 1176 (GSQG…PGLE), 1177 to 1236 (GDHG…QGEK), and 1240 to 1299 (GAKG…NGHK). A triple-helical region spans residues 610-1603 (GPPGSKGDCG…RGRPGPPGPP (994 aa)). Over residues 639–654 (RGPPGPYGNPGPPGPP) the composition is skewed to pro residues. 2 stretches are compositionally biased toward low complexity: residues 677 to 690 (NMGL…PGPL) and 699 to 719 (PGAA…SPGA). Residues 865–874 (GLPGGRGKPG) are compositionally biased toward gly residues. Positions 896–909 (FPGDIGPPGDNGPE) are enriched in low complexity. Positions 1018–1027 (GTPGGIGNPG) are enriched in gly residues. 3 stretches are compositionally biased toward low complexity: residues 1074 to 1086 (RGRP…QGAA), 1112 to 1122 (LPGEPGSQGPQ), and 1152 to 1167 (KGDL…QGLI). 2 stretches are compositionally biased toward basic and acidic residues: residues 1187–1212 (LKGD…KGED) and 1226–1238 (REGK…EKGQ). Basic and acidic residues-rich tracts occupy residues 1311–1323 (KGEK…DGKT) and 1335–1345 (PVGDRGDRGEP). One can recognise a Collagen-like 12 domain in the interval 1325 to 1384 (GPPGPPGDRGPVGDRGDRGEPGDPGYPGQEGVQGLRGEPGQQGQPGHPGPRGRPGPKGSK). 3 stretches are compositionally biased toward low complexity: residues 1360–1369 (RGEPGQQGQP), 1395–1422 (KAGP…RQGP), and 1438–1465 (PGYQ…PGVA). Collagen-like domains follow at residues 1424–1483 (GTAG…SGLP), 1484–1543 (GQLG…KGIQ), and 1544–1603 (GPRG…PGPP). The segment covering 1557–1572 (IIGPPGMLGPSGLPGP) has biased composition (low complexity). The segment covering 1588–1605 (RGPPGPRGRPGPPGPPWH) has biased composition (pro residues). The propeptide at 1607 to 1845 (IQFQQDDLGA…RLEVGPACFL (239 aa)) is C-terminal propeptide. The region spanning 1645 to 1845 (GEIFKTLHYL…RLEVGPACFL (201 aa)) is the Fibrillar collagen NC1 domain. 3 disulfides stabilise this stretch: Cys-1675–Cys-1707, Cys-1716–Cys-1843, and Cys-1752–Cys-1796. Asp-1693, Asn-1695, Cys-1698, and Asp-1701 together coordinate Ca(2+). The N-linked (GlcNAc...) asparagine glycan is linked to Asn-1754.

This sequence belongs to the fibrillar collagen family. In terms of tissue distribution, highly expressed in cartilage, eye and ear.

It is found in the secreted. The protein resides in the extracellular space. It localises to the extracellular matrix. Its function is as follows. Plays a role during the calcification of cartilage and the transition of cartilage to bone. This chain is Collagen alpha-1(XXVII) chain (Col27a1), found in Mus musculus (Mouse).